A 346-amino-acid chain; its full sequence is Elongation factor Ts (346 aa).

The involved in Mg(2+) ion dislocation from EF-Tu stretch occupies residues 80–83 (TDFV).

The protein belongs to the EF-Ts family.

It localises to the cytoplasm. Associates with the EF-Tu.GDP complex and induces the exchange of GDP to GTP. It remains bound to the aminoacyl-tRNA.EF-Tu.GTP complex up to the GTP hydrolysis stage on the ribosome. The polypeptide is Elongation factor Ts (Streptococcus pyogenes serotype M1).